The chain runs to 152 residues: Large ribosomal subunit protein bL9 (152 aa).

The protein belongs to the bacterial ribosomal protein bL9 family.

Its function is as follows. Binds to the 23S rRNA. This chain is Large ribosomal subunit protein bL9, found in Picosynechococcus sp. (strain ATCC 27264 / PCC 7002 / PR-6) (Agmenellum quadruplicatum).